The chain runs to 816 residues: S-layer protein (816 aa).

A signal peptide spans 1-29 (MAKTNSYKKVIAGTMTAAMVAGVVSPVAA). 3 consecutive SLH domains span residues 30–93 (AGKS…DAKP), 94–150 (SFAD…KVNG), and 152–215 (PATK…VAKV). The BIG2 domain maps to 403–480 (FTSKDFKQND…TVKDSKGKEL (78 aa)).

It localises to the secreted. The protein localises to the cell wall. It is found in the S-layer. Functionally, the S-layer is a paracrystalline mono-layered assembly of proteins which coat the surface of bacteria. This Bacillus thuringiensis subsp. finitimus protein is S-layer protein.